We begin with the raw amino-acid sequence, 242 residues long: UDP-2,3-diacylglucosamine hydrolase (242 aa).

The Mn(2+) site is built by D9, H11, D42, N79, and H114. Residue 79–80 coordinates substrate; that stretch reads NR. Residues D122, S160, N164, K167, and H195 each coordinate substrate. 2 residues coordinate Mn(2+): H195 and H197.

Belongs to the LpxH family. Requires Mn(2+) as cofactor.

The protein resides in the cell inner membrane. The enzyme catalyses UDP-2-N,3-O-bis[(3R)-3-hydroxytetradecanoyl]-alpha-D-glucosamine + H2O = 2-N,3-O-bis[(3R)-3-hydroxytetradecanoyl]-alpha-D-glucosaminyl 1-phosphate + UMP + 2 H(+). It participates in glycolipid biosynthesis; lipid IV(A) biosynthesis; lipid IV(A) from (3R)-3-hydroxytetradecanoyl-[acyl-carrier-protein] and UDP-N-acetyl-alpha-D-glucosamine: step 4/6. In terms of biological role, hydrolyzes the pyrophosphate bond of UDP-2,3-diacylglucosamine to yield 2,3-diacylglucosamine 1-phosphate (lipid X) and UMP by catalyzing the attack of water at the alpha-P atom. Involved in the biosynthesis of lipid A, a phosphorylated glycolipid that anchors the lipopolysaccharide to the outer membrane of the cell. The polypeptide is UDP-2,3-diacylglucosamine hydrolase (Shewanella loihica (strain ATCC BAA-1088 / PV-4)).